Reading from the N-terminus, the 260-residue chain is Ribonuclease 3 (260 aa).

Residues 16–145 (VQLLESRLGL…VFGAVFLTSG (130 aa)) enclose the RNase III domain. E58 is a binding site for Mg(2+). Residue D62 is part of the active site. Residues D131 and E134 each coordinate Mg(2+). E134 is a catalytic residue. The DRBM domain occupies 172 to 241 (DYKTLLQEMA…AQATLEKLRE (70 aa)). Residues 219–260 (ATGRSKKEAEQSAAQATLEKLREDAACPTSPPPGTPRHDTPA) are disordered.

This sequence belongs to the ribonuclease III family. As to quaternary structure, homodimer. Requires Mg(2+) as cofactor.

The protein resides in the cytoplasm. The enzyme catalyses Endonucleolytic cleavage to 5'-phosphomonoester.. In terms of biological role, digests double-stranded RNA. Involved in the processing of primary rRNA transcript to yield the immediate precursors to the large and small rRNAs (23S and 16S). Processes some mRNAs, and tRNAs when they are encoded in the rRNA operon. Processes pre-crRNA and tracrRNA of type II CRISPR loci if present in the organism. The polypeptide is Ribonuclease 3 (Myxococcus xanthus (strain DK1622)).